A 228-amino-acid polypeptide reads, in one-letter code: Glycerol-3-phosphate acyltransferase (228 aa).

6 consecutive transmembrane segments (helical) span residues 1 to 21, 56 to 76, 104 to 124, 136 to 156, 161 to 181, and 183 to 203; these read MINW…LGAT, VPAL…IALV, MVII…WIGF, ILLA…IVVL, IVSL…FFTG, and PLPY…RHIS.

The protein belongs to the PlsY family. As to quaternary structure, probably interacts with PlsX.

It localises to the cell inner membrane. It carries out the reaction an acyl phosphate + sn-glycerol 3-phosphate = a 1-acyl-sn-glycero-3-phosphate + phosphate. Its pathway is lipid metabolism; phospholipid metabolism. In terms of biological role, catalyzes the transfer of an acyl group from acyl-phosphate (acyl-PO(4)) to glycerol-3-phosphate (G3P) to form lysophosphatidic acid (LPA). This enzyme utilizes acyl-phosphate as fatty acyl donor, but not acyl-CoA or acyl-ACP. The sequence is that of Glycerol-3-phosphate acyltransferase from Trichodesmium erythraeum (strain IMS101).